We begin with the raw amino-acid sequence, 977 residues long: Bifunctional glutamine synthetase adenylyltransferase/adenylyl-removing enzyme (977 aa).

An adenylyl removase region spans residues 1 to 457 (MRLPLPSDLP…HFRQVIADPD (457 aa)). The interval 468–977 (GGEWSPLWEQ…RRIWGELGLS (510 aa)) is adenylyl transferase.

It belongs to the GlnE family. Mg(2+) is required as a cofactor.

It carries out the reaction [glutamine synthetase]-O(4)-(5'-adenylyl)-L-tyrosine + phosphate = [glutamine synthetase]-L-tyrosine + ADP. It catalyses the reaction [glutamine synthetase]-L-tyrosine + ATP = [glutamine synthetase]-O(4)-(5'-adenylyl)-L-tyrosine + diphosphate. Its function is as follows. Involved in the regulation of glutamine synthetase GlnA, a key enzyme in the process to assimilate ammonia. When cellular nitrogen levels are high, the C-terminal adenylyl transferase (AT) inactivates GlnA by covalent transfer of an adenylyl group from ATP to specific tyrosine residue of GlnA, thus reducing its activity. Conversely, when nitrogen levels are low, the N-terminal adenylyl removase (AR) activates GlnA by removing the adenylyl group by phosphorolysis, increasing its activity. The regulatory region of GlnE binds the signal transduction protein PII (GlnB) which indicates the nitrogen status of the cell. This is Bifunctional glutamine synthetase adenylyltransferase/adenylyl-removing enzyme from Pseudomonas putida (strain ATCC 47054 / DSM 6125 / CFBP 8728 / NCIMB 11950 / KT2440).